A 262-amino-acid chain; its full sequence is Acyl-[acyl-carrier-protein]--UDP-N-acetylglucosamine O-acyltransferase (262 aa).

It belongs to the transferase hexapeptide repeat family. LpxA subfamily. In terms of assembly, homotrimer.

Its subcellular location is the cytoplasm. It catalyses the reaction a (3R)-hydroxyacyl-[ACP] + UDP-N-acetyl-alpha-D-glucosamine = a UDP-3-O-[(3R)-3-hydroxyacyl]-N-acetyl-alpha-D-glucosamine + holo-[ACP]. It participates in glycolipid biosynthesis; lipid IV(A) biosynthesis; lipid IV(A) from (3R)-3-hydroxytetradecanoyl-[acyl-carrier-protein] and UDP-N-acetyl-alpha-D-glucosamine: step 1/6. In terms of biological role, involved in the biosynthesis of lipid A, a phosphorylated glycolipid that anchors the lipopolysaccharide to the outer membrane of the cell. The protein is Acyl-[acyl-carrier-protein]--UDP-N-acetylglucosamine O-acyltransferase of Vibrio parahaemolyticus serotype O3:K6 (strain RIMD 2210633).